The primary structure comprises 1312 residues: Kinesin-like protein KIF16B (1312 aa).

The region spanning serine 3 to isoleucine 358 is the Kinesin motor domain. Glycine 102–serine 109 provides a ligand contact to ATP. Positions glutamate 366–lysine 425 form a coiled coil. Serine 398 is modified (phosphoserine). An FHA domain is found at valine 480–glycine 544. Threonine 577 carries the post-translational modification Phosphothreonine. Phosphoserine is present on residues serine 582, serine 838, serine 1047, and serine 1145. Coiled-coil stretches lie at residues lysine 835–histidine 913 and glutamine 941–isoleucine 1073. In terms of domain architecture, PX spans aspartate 1177–threonine 1291.

The protein belongs to the TRAFAC class myosin-kinesin ATPase superfamily. Kinesin family. As to quaternary structure, interacts with PTPN21. Interacts with RAB14.

The protein resides in the cytoplasm. Its subcellular location is the cytoskeleton. It localises to the early endosome membrane. It is found in the spindle. Functionally, plus end-directed microtubule-dependent motor protein involved in endosome transport and receptor recycling and degradation. Regulates the plus end motility of early endosomes and the balance between recycling and degradation of receptors such as EGF receptor (EGFR) and FGF receptor (FGFR). Regulates the Golgi to endosome transport of FGFR-containing vesicles during early development, a key process for developing basement membrane and epiblast and primitive endoderm lineages during early postimplantation development. This Mus musculus (Mouse) protein is Kinesin-like protein KIF16B (Kif16b).